Reading from the N-terminus, the 260-residue chain is Thiazole synthase (260 aa).

The active-site Schiff-base intermediate with DXP is the lysine 96. 1-deoxy-D-xylulose 5-phosphate contacts are provided by residues glycine 157, 184-185 (AG), and 206-207 (NT).

It belongs to the ThiG family. In terms of assembly, homotetramer. Forms heterodimers with either ThiH or ThiS.

The protein localises to the cytoplasm. It carries out the reaction [ThiS sulfur-carrier protein]-C-terminal-Gly-aminoethanethioate + 2-iminoacetate + 1-deoxy-D-xylulose 5-phosphate = [ThiS sulfur-carrier protein]-C-terminal Gly-Gly + 2-[(2R,5Z)-2-carboxy-4-methylthiazol-5(2H)-ylidene]ethyl phosphate + 2 H2O + H(+). It participates in cofactor biosynthesis; thiamine diphosphate biosynthesis. Functionally, catalyzes the rearrangement of 1-deoxy-D-xylulose 5-phosphate (DXP) to produce the thiazole phosphate moiety of thiamine. Sulfur is provided by the thiocarboxylate moiety of the carrier protein ThiS. In vitro, sulfur can be provided by H(2)S. This Nitrobacter hamburgensis (strain DSM 10229 / NCIMB 13809 / X14) protein is Thiazole synthase.